The chain runs to 429 residues: Glutamate-1-semialdehyde 2,1-aminomutase (429 aa).

Lys-265 carries the post-translational modification N6-(pyridoxal phosphate)lysine.

The protein belongs to the class-III pyridoxal-phosphate-dependent aminotransferase family. HemL subfamily. As to quaternary structure, homodimer. Requires pyridoxal 5'-phosphate as cofactor.

It is found in the cytoplasm. It catalyses the reaction (S)-4-amino-5-oxopentanoate = 5-aminolevulinate. The protein operates within porphyrin-containing compound metabolism; protoporphyrin-IX biosynthesis; 5-aminolevulinate from L-glutamyl-tRNA(Glu): step 2/2. This chain is Glutamate-1-semialdehyde 2,1-aminomutase, found in Acidobacterium capsulatum (strain ATCC 51196 / DSM 11244 / BCRC 80197 / JCM 7670 / NBRC 15755 / NCIMB 13165 / 161).